Consider the following 242-residue polypeptide: Murein peptide amidase A (242 aa).

The Peptidase M14 domain occupies Met1 to His234. 3 residues coordinate Zn(2+): His49, Glu52, and His157. The Proton donor/acceptor role is filled by Glu210.

The protein belongs to the peptidase M14 family. Homodimer. It depends on Zn(2+) as a cofactor.

The protein localises to the cytoplasm. It carries out the reaction L-alanyl-gamma-D-glutamyl-meso-2,6-diaminopimelate + H2O = L-alanyl-D-glutamate + meso-2,6-diaminopimelate. It functions in the pathway cell wall degradation; peptidoglycan degradation. Involved in muropeptide degradation. Catalyzes the hydrolysis of the gamma-D-glutamyl-diaminopimelic acid (gamma-D-Glu-Dap) amide bond in the murein tripeptide L-alanyl-gamma-D-glutamyl-meso-diaminopimelic acid, leading to the formation of L-Ala-gamma-D-Glu and Dap. The protein is Murein peptide amidase A of Escherichia coli O157:H7.